The sequence spans 759 residues: Hormone-sensitive lipase (759 aa).

The short motif at 349–351 (HGG) is the Involved in the stabilization of the negatively charged intermediate by the formation of the oxyanion hole element. Residue Ser-423 is part of the active site. Residues 534–553 (GRKPQKTTSPTAESVRPTES) form a disordered region. Residue Ser-557 is modified to Phosphoserine. A Phosphoserine; by AMPK modification is found at Ser-559. Thr-574 carries the post-translational modification Phosphothreonine. A disordered region spans residues 583-604 (LSNSEPSDSPEMSQSMETLGPS). Residues 585–604 (NSEPSDSPEMSQSMETLGPS) show a composition bias toward polar residues. Phosphoserine is present on residues Ser-597, Ser-618, Ser-650, and Ser-651. Catalysis depends on residues Asp-694 and His-724.

The protein belongs to the 'GDXG' lipolytic enzyme family. In terms of assembly, monomer and homodimer. Interacts with CAVIN1 in the adipocyte cytoplasm. Interacts with PLIN5. Phosphorylation by AMPK reduces its translocation towards the lipid droplets.

It localises to the cell membrane. The protein localises to the membrane. The protein resides in the caveola. It is found in the cytoplasm. Its subcellular location is the cytosol. It localises to the lipid droplet. It catalyses the reaction a diacylglycerol + H2O = a monoacylglycerol + a fatty acid + H(+). The catalysed reaction is a triacylglycerol + H2O = a diacylglycerol + a fatty acid + H(+). The enzyme catalyses a monoacylglycerol + H2O = glycerol + a fatty acid + H(+). It carries out the reaction Hydrolyzes glycerol monoesters of long-chain fatty acids.. It catalyses the reaction cholesteryl (9Z-octadecenoate) + H2O = cholesterol + (9Z)-octadecenoate + H(+). The catalysed reaction is all-trans-retinyl hexadecanoate + H2O = all-trans-retinol + hexadecanoate + H(+). The enzyme catalyses 1,2-di-(9Z-octadecenoyl)-glycerol + H2O = (9Z-octadecenoyl)-glycerol + (9Z)-octadecenoate + H(+). It carries out the reaction 2-(5Z,8Z,11Z,14Z-eicosatetraenoyl)-glycerol + H2O = glycerol + (5Z,8Z,11Z,14Z)-eicosatetraenoate + H(+). It catalyses the reaction 1-(9Z-octadecenoyl)-glycerol + H2O = glycerol + (9Z)-octadecenoate + H(+). The catalysed reaction is 2-(9Z-octadecenoyl)-glycerol + H2O = glycerol + (9Z)-octadecenoate + H(+). The enzyme catalyses 1-O-hexadecyl-2-acetyl-sn-glycerol + H2O = 1-O-hexadecyl-sn-glycerol + acetate + H(+). It carries out the reaction 1,2-di-(9Z-octadecenoyl)-sn-glycerol + H2O = (9Z-octadecenoyl)-glycerol + (9Z)-octadecenoate + H(+). It catalyses the reaction 1,3-di-(9Z-octadecenoyl)-glycerol + H2O = 1-(9Z-octadecenoyl)-glycerol + (9Z)-octadecenoate + H(+). The catalysed reaction is 1,2-di-(9Z-octadecenoyl)-glycerol + (9Z)-octadecenoate + H(+) = 1,2,3-tri-(9Z-octadecenoyl)-glycerol + H2O. The enzyme catalyses 2,3-di-(9Z)-octadecenoyl-sn-glycerol + H2O = 2-(9Z-octadecenoyl)-glycerol + (9Z)-octadecenoate + H(+). It carries out the reaction 1,2,3-tri-(9Z-octadecenoyl)-glycerol + H2O = di-(9Z)-octadecenoylglycerol + (9Z)-octadecenoate + H(+). It catalyses the reaction 1,2-di-(9Z-octadecenoyl)-glycerol + H2O = 2-(9Z-octadecenoyl)-glycerol + (9Z)-octadecenoate + H(+). It participates in glycerolipid metabolism; triacylglycerol degradation. In terms of biological role, lipase with broad substrate specificity, catalyzing the hydrolysis of triacylglycerols (TAGs), diacylglycerols (DAGs), monoacylglycerols (MAGs), cholesteryl esters and retinyl esters. Shows a preferential hydrolysis of DAGs over TAGs and MAGs and of the fatty acid (FA) esters at the sn-1 and sn-2 positions of the glycerol backbone in TAGs. Preferentially hydrolyzes FA esters at the sn-3 position of the glycerol backbone in DAGs. Catalyzes the hydrolysis of 2-arachidonoylglycerol, an endocannabinoid and of 2-acetyl monoalkylglycerol ether, the penultimate precursor of the pathway for de novo synthesis of platelet-activating factor. In adipose tissue and heart, it primarily hydrolyzes stored triglycerides to free fatty acids, while in steroidogenic tissues, it principally converts cholesteryl esters to free cholesterol for steroid hormone production. This Mus musculus (Mouse) protein is Hormone-sensitive lipase (Lipe).